A 186-amino-acid polypeptide reads, in one-letter code: Holliday junction branch migration complex subunit RuvA (186 aa).

The interval 1 to 61 is domain I; it reads MYRYIKGIVT…EDIFQLYGFK (61 aa). Positions 62–134 are domain II; that stretch reads DEETLNLFLK…LKGKLVNDEL (73 aa). The flexible linker stretch occupies residues 134 to 137; that stretch reads LDMQ. Residues 138 to 186 are domain III; the sequence is LLSDNSKDVAAALEALGYNKKEIAKSLKHVNFDQDLNKALKEALAILLK.

Belongs to the RuvA family. Homotetramer. Forms an RuvA(8)-RuvB(12)-Holliday junction (HJ) complex. HJ DNA is sandwiched between 2 RuvA tetramers; dsDNA enters through RuvA and exits via RuvB. An RuvB hexamer assembles on each DNA strand where it exits the tetramer. Each RuvB hexamer is contacted by two RuvA subunits (via domain III) on 2 adjacent RuvB subunits; this complex drives branch migration. In the full resolvosome a probable DNA-RuvA(4)-RuvB(12)-RuvC(2) complex forms which resolves the HJ.

Its subcellular location is the cytoplasm. In terms of biological role, the RuvA-RuvB-RuvC complex processes Holliday junction (HJ) DNA during genetic recombination and DNA repair, while the RuvA-RuvB complex plays an important role in the rescue of blocked DNA replication forks via replication fork reversal (RFR). RuvA specifically binds to HJ cruciform DNA, conferring on it an open structure. The RuvB hexamer acts as an ATP-dependent pump, pulling dsDNA into and through the RuvAB complex. HJ branch migration allows RuvC to scan DNA until it finds its consensus sequence, where it cleaves and resolves the cruciform DNA. The sequence is that of Holliday junction branch migration complex subunit RuvA from Acholeplasma laidlawii (strain PG-8A).